The primary structure comprises 34 residues: Photosystem II reaction center protein Psb30 (34 aa).

Residues 6-26 form a helical membrane-spanning segment; the sequence is VIAQLVSLGVIVLVGPAVIIL.

This sequence belongs to the Psb30/Ycf12 family. PSII is composed of 1 copy each of membrane proteins PsbA, PsbB, PsbC, PsbD, PsbE, PsbF, PsbH, PsbI, PsbJ, PsbK, PsbL, PsbM, PsbT, PsbX, PsbY, PsbZ, Psb30/Ycf12, peripheral proteins of the oxygen-evolving complex and a large number of cofactors. It forms dimeric complexes.

The protein localises to the plastid. Its subcellular location is the chloroplast thylakoid membrane. Functionally, a core subunit of photosystem II (PSII), probably helps stabilize the reaction center. In Pyropia yezoensis (Susabi-nori), this protein is Photosystem II reaction center protein Psb30.